An 891-amino-acid chain; its full sequence is Fanconi-associated nuclease 1 homolog (891 aa).

The Mn(2+) site is built by Glu712, Asp833, Glu852, and Val853. The VRR-NUC domain occupies 770 to 884 (GMAEEILIIS…GFNVEICKVR (115 aa)).

The protein belongs to the FAN1 family. The cofactor is Mn(2+). It depends on Mg(2+) as a cofactor.

Its subcellular location is the nucleus. It catalyses the reaction Hydrolytically removes 5'-nucleotides successively from the 3'-hydroxy termini of 3'-hydroxy-terminated oligonucleotides.. Its function is as follows. Nuclease required for the repair of DNA interstrand cross-links (ICLs). Acts as a 5'-3' exonuclease that anchors at a cut end of DNA and cleaves DNA successively at every third nucleotide, allowing to excise an ICL from one strand through flanking incisions. May act upstream of the helicase RECQL4A and the ATPase RAD5A, which is involved in error-free post-replicative repair. Functions independently of MUS81 pathway, but in a similar pathway with RECQ4A, RAD5A and MFH1 in ICL repair. This Arabidopsis thaliana (Mouse-ear cress) protein is Fanconi-associated nuclease 1 homolog.